A 207-amino-acid polypeptide reads, in one-letter code: Large ribosomal subunit protein uL4 (207 aa).

Residues 44–77 (LRQGTHKTKGRSEVRGGGRKPWRQKGTGRARQGS) are disordered. A compositionally biased stretch (basic residues) spans 60–71 (GGRKPWRQKGTG).

Belongs to the universal ribosomal protein uL4 family. In terms of assembly, part of the 50S ribosomal subunit.

Its function is as follows. One of the primary rRNA binding proteins, this protein initially binds near the 5'-end of the 23S rRNA. It is important during the early stages of 50S assembly. It makes multiple contacts with different domains of the 23S rRNA in the assembled 50S subunit and ribosome. Forms part of the polypeptide exit tunnel. This Shouchella clausii (strain KSM-K16) (Alkalihalobacillus clausii) protein is Large ribosomal subunit protein uL4.